The following is a 233-amino-acid chain: Uridylate kinase (233 aa).

ATP contacts are provided by residues 9–12, Gly51, and Arg55; that span reads KLSG. Residues Asp69 and 130–137 each bind UMP; that span reads TGNPFFST. ATP contacts are provided by Asn158, Tyr164, and Asp167.

It belongs to the UMP kinase family. In terms of assembly, homohexamer.

It is found in the cytoplasm. It carries out the reaction UMP + ATP = UDP + ADP. Its pathway is pyrimidine metabolism; CTP biosynthesis via de novo pathway; UDP from UMP (UMPK route): step 1/1. Its activity is regulated as follows. Inhibited by UTP. Its function is as follows. Catalyzes the reversible phosphorylation of UMP to UDP. The polypeptide is Uridylate kinase (Thermus thermophilus (strain ATCC BAA-163 / DSM 7039 / HB27)).